Here is a 312-residue protein sequence, read N- to C-terminus: Ribosomal RNA small subunit methyltransferase H (312 aa).

Residues 34 to 36, D54, F81, D102, and Q109 each bind S-adenosyl-L-methionine; that span reads AGH.

It belongs to the methyltransferase superfamily. RsmH family.

It localises to the cytoplasm. It catalyses the reaction cytidine(1402) in 16S rRNA + S-adenosyl-L-methionine = N(4)-methylcytidine(1402) in 16S rRNA + S-adenosyl-L-homocysteine + H(+). In terms of biological role, specifically methylates the N4 position of cytidine in position 1402 (C1402) of 16S rRNA. The chain is Ribosomal RNA small subunit methyltransferase H from Geotalea daltonii (strain DSM 22248 / JCM 15807 / FRC-32) (Geobacter daltonii).